Here is a 99-residue protein sequence, read N- to C-terminus: A-type ATP synthase subunit F (99 aa).

Belongs to the V-ATPase F subunit family. As to quaternary structure, has multiple subunits with at least A(3), B(3), C, D, E, F, H, I and proteolipid K(x).

It localises to the cell membrane. Functionally, component of the A-type ATP synthase that produces ATP from ADP in the presence of a proton gradient across the membrane. This is A-type ATP synthase subunit F from Methanocella arvoryzae (strain DSM 22066 / NBRC 105507 / MRE50).